The chain runs to 251 residues: Triosephosphate isomerase (251 aa).

10-12 (NWK) provides a ligand contact to substrate. His98 serves as the catalytic Electrophile. The active-site Proton acceptor is the Glu169. Residues Gly175, Ser213, and 234-235 (GG) each bind substrate.

The protein belongs to the triosephosphate isomerase family. As to quaternary structure, homodimer.

Its subcellular location is the cytoplasm. It carries out the reaction D-glyceraldehyde 3-phosphate = dihydroxyacetone phosphate. It participates in carbohydrate biosynthesis; gluconeogenesis. It functions in the pathway carbohydrate degradation; glycolysis; D-glyceraldehyde 3-phosphate from glycerone phosphate: step 1/1. Its function is as follows. Involved in the gluconeogenesis. Catalyzes stereospecifically the conversion of dihydroxyacetone phosphate (DHAP) to D-glyceraldehyde-3-phosphate (G3P). The protein is Triosephosphate isomerase of Paracidovorax citrulli (strain AAC00-1) (Acidovorax citrulli).